Here is a 494-residue protein sequence, read N- to C-terminus: Homeotic protein bicoid (494 aa).

Disordered regions lie at residues 1 to 49 (MAQP…PPQF), 149 to 210 (RRRH…TAHM), and 263 to 293 (QQVH…AQQQ). A compositionally biased stretch (basic residues) spans 14 to 40 (PLPHTHTHPHPHSHPHPHSHPHPHHQH). Residues 97 to 156 (PRRTRTTFTSSQIAELEQHFLQGRYLTAPRLADLSAKLALGTAQVKIWFKNRRRRHKIQS) constitute a DNA-binding region (homeobox). The segment covering 154–163 (IQSDQHKDQS) has biased composition (basic and acidic residues). Residues 433-440 (RGAAFAKF) are RNA-binding.

This sequence belongs to the paired homeobox family. Bicoid subfamily. As to quaternary structure, interacts with Bin1; in vitro and yeast cells. Interacts with bin3. Maternal expression is an anterior cap concentrated in the cortical cytoplasm. Its transcript is produced maternally and sequestered near the anterior pole of the mature oocyte. After egg deposition, it is translated into protein, which diffuses toward the posterior, forming a long-range anterior gradient.

The protein localises to the nucleus. Segment polarity transcription factor that provides positional cues for the development of head and thoracic segments. Forms a protein concentration gradient that patterns the anterior-posterior axis during embryogenesis and promotes the expression of anterior gap genes, such as hunchback (hb), ocelliless (oc), and buttonhead (btd). Binds to regulatory DNA sequences containing a 5'-TAATCC-3' sequence motif. Also binds RNA. Interacts with Bin1 to repress transcription of bicoid target genes in the anterior tip of the embryo; a process known as retraction. The protein is Homeotic protein bicoid of Drosophila melanogaster (Fruit fly).